A 436-amino-acid chain; its full sequence is Phosphomethylpyrimidine synthase (436 aa).

Residues Asn-69, Met-98, Tyr-127, His-163, 185 to 187 (SRG), 226 to 229 (DACR), and Glu-265 each bind substrate. A Zn(2+)-binding site is contributed by His-269. A substrate-binding site is contributed by Tyr-292. Zn(2+) is bound at residue His-333. Residues Cys-409, Cys-412, and Cys-416 each contribute to the [4Fe-4S] cluster site.

It belongs to the ThiC family. [4Fe-4S] cluster serves as cofactor.

The catalysed reaction is 5-amino-1-(5-phospho-beta-D-ribosyl)imidazole + S-adenosyl-L-methionine = 4-amino-2-methyl-5-(phosphooxymethyl)pyrimidine + CO + 5'-deoxyadenosine + formate + L-methionine + 3 H(+). It functions in the pathway cofactor biosynthesis; thiamine diphosphate biosynthesis. Catalyzes the synthesis of the hydroxymethylpyrimidine phosphate (HMP-P) moiety of thiamine from aminoimidazole ribotide (AIR) in a radical S-adenosyl-L-methionine (SAM)-dependent reaction. This chain is Phosphomethylpyrimidine synthase, found in Clostridium acetobutylicum (strain ATCC 824 / DSM 792 / JCM 1419 / IAM 19013 / LMG 5710 / NBRC 13948 / NRRL B-527 / VKM B-1787 / 2291 / W).